Here is a 341-residue protein sequence, read N- to C-terminus: Endoglucanase 1 (341 aa).

The signal sequence occupies residues 1-16; the sequence is MKTATLLAALSVLAGA. The propeptide occupies 17–30; that stretch reads LAAPLAGDSALHRR. Glutamate 166 serves as the catalytic Proton donor. Glutamate 275 acts as the Nucleophile in catalysis.

The protein belongs to the glycosyl hydrolase 5 (cellulase A) family.

The catalysed reaction is Endohydrolysis of (1-&gt;4)-beta-D-glucosidic linkages in cellulose, lichenin and cereal beta-D-glucans.. Functionally, has endoglucanase activity on carboxymethyl-cellulose (CMC). In Saitozyma flava (Cryptococcus flavus), this protein is Endoglucanase 1 (CMC1).